The chain runs to 415 residues: Elongation factor 1-gamma 1 (415 aa).

Ser2 carries the post-translational modification N-acetylserine. The GST N-terminal domain maps to 2 to 78 (SQGTLYANFR…YLVKLSQDDK (77 aa)). Thr32 is modified (phosphothreonine). The 127-residue stretch at 89 to 215 (DLNAQAQIIR…KDFKFADKPL (127 aa)) folds into the GST C-terminal domain. Residues 212–256 (DKPLSPPQKKKEKKAPAAAPAASKKKEEAKPAATETETSSKKPKH) form a disordered region. Residues 254-415 (PKHPLELLGK…KEIVDGKVLK (162 aa)) enclose the EF-1-gamma C-terminal domain.

The eukaryotic elongation factor 1 complex (eEF1) is probably a heterohexamer. Two trimeric complexes, each composed of eEF1A (TEF1 or TEF2), eEF1Balpha (EFB1) and eEF1Bgamma (CAM1 or TEF4), are probably dimerized via the eF1Bgamma subunits. The eEF1B subcomplex with the GEF activity is formed of eEF1Balpha and eEF1Bgamma. CAM1 interacts with EFB1. Component of a complex bound to MXR1 promoter region.

It is found in the cytoplasm. The protein localises to the nucleus. It participates in protein biosynthesis; polypeptide chain elongation. Its function is as follows. Subunit of the eukaryotic elongation factor 1 complex (eEF1). Probably plays a role in anchoring the complex to other cellular components. May be involved in transcriptional regulation of MXR1. This is Elongation factor 1-gamma 1 (CAM1) from Saccharomyces cerevisiae (strain ATCC 204508 / S288c) (Baker's yeast).